The sequence spans 147 residues: Hemoglobin subunit beta (147 aa).

N-acetylvaline is present on Val2. The Globin domain occupies 3–147 (HLTGDEKAAV…VANALAHKYH (145 aa)). Thr13 carries the phosphothreonine modification. Ser45 carries the post-translational modification Phosphoserine. Lys60 is modified (N6-acetyllysine). Residue His64 coordinates heme b. Lys83 is modified (N6-acetyllysine). His93 serves as a coordination point for heme b. Cys94 is subject to S-nitrosocysteine. An N6-acetyllysine modification is found at Lys145.

The protein belongs to the globin family. In terms of assembly, heterotetramer of two alpha chains and two beta chains. In terms of tissue distribution, red blood cells.

Functionally, involved in oxygen transport from the lung to the various peripheral tissues. The chain is Hemoglobin subunit beta (HBB) from Saimiri sciureus (Common squirrel monkey).